The chain runs to 477 residues: Methylenetetrahydrofolate--tRNA-(uracil-5-)-methyltransferase TrmFO (477 aa).

G15 to G20 provides a ligand contact to FAD.

The protein belongs to the MnmG family. TrmFO subfamily. The cofactor is FAD.

The protein localises to the cytoplasm. It carries out the reaction uridine(54) in tRNA + (6R)-5,10-methylene-5,6,7,8-tetrahydrofolate + NADH + H(+) = 5-methyluridine(54) in tRNA + (6S)-5,6,7,8-tetrahydrofolate + NAD(+). The catalysed reaction is uridine(54) in tRNA + (6R)-5,10-methylene-5,6,7,8-tetrahydrofolate + NADPH + H(+) = 5-methyluridine(54) in tRNA + (6S)-5,6,7,8-tetrahydrofolate + NADP(+). In terms of biological role, catalyzes the folate-dependent formation of 5-methyl-uridine at position 54 (M-5-U54) in all tRNAs. The sequence is that of Methylenetetrahydrofolate--tRNA-(uracil-5-)-methyltransferase TrmFO from Nitrobacter winogradskyi (strain ATCC 25391 / DSM 10237 / CIP 104748 / NCIMB 11846 / Nb-255).